Reading from the N-terminus, the 425-residue chain is Protein CLP1 homolog (425 aa).

ATP is bound by residues Glu18, Lys59, and Asp121–Thr126.

The protein belongs to the Clp1 family. Clp1 subfamily.

The protein resides in the nucleus. Its function is as follows. Required for endonucleolytic cleavage during polyadenylation-dependent pre-mRNA 3'-end formation. The protein is Protein CLP1 homolog (cbc) of Drosophila pseudoobscura pseudoobscura (Fruit fly).